An 861-amino-acid polypeptide reads, in one-letter code: Probable alpha,alpha-trehalose-phosphate synthase [UDP-forming] 10 (861 aa).

S5 carries the post-translational modification Phosphoserine. Phosphothreonine is present on T32. The glycosyltransferase stretch occupies residues 59-546 (ERKIIVANFL…ARSFSQDLER (488 aa)).

The protein in the N-terminal section; belongs to the glycosyltransferase 20 family. This sequence in the C-terminal section; belongs to the trehalose phosphatase family.

The catalysed reaction is D-glucose 6-phosphate + UDP-alpha-D-glucose = alpha,alpha-trehalose 6-phosphate + UDP + H(+). The polypeptide is Probable alpha,alpha-trehalose-phosphate synthase [UDP-forming] 10 (TPS10) (Arabidopsis thaliana (Mouse-ear cress)).